The primary structure comprises 259 residues: Tryptophan synthase alpha chain (259 aa).

Active-site proton acceptor residues include Glu-48 and Asp-59.

Belongs to the TrpA family. In terms of assembly, tetramer of two alpha and two beta chains.

It catalyses the reaction (1S,2R)-1-C-(indol-3-yl)glycerol 3-phosphate + L-serine = D-glyceraldehyde 3-phosphate + L-tryptophan + H2O. Its pathway is amino-acid biosynthesis; L-tryptophan biosynthesis; L-tryptophan from chorismate: step 5/5. The alpha subunit is responsible for the aldol cleavage of indoleglycerol phosphate to indole and glyceraldehyde 3-phosphate. The chain is Tryptophan synthase alpha chain from Syntrophomonas wolfei subsp. wolfei (strain DSM 2245B / Goettingen).